The primary structure comprises 331 residues: N-arachidonyl glycine receptor (331 aa).

At 1–26 the chain is on the extracellular side; sequence MITLNNQDQPVPFNSSHPDEYKIAAL. Residue N14 is glycosylated (N-linked (GlcNAc...) asparagine). A helical transmembrane segment spans residues 27 to 47; that stretch reads VFYSCIFIIGLFVNITALWVF. Over 48 to 56 the chain is Cytoplasmic; that stretch reads SCTTKKRTT. A helical membrane pass occupies residues 57-77; it reads VTIYMMNVALVDLIFIMTLPF. Residues 78-95 are Extracellular-facing; sequence RMFYYAKDEWPFGEYFCQ. C94 and C172 are joined by a disulfide. The helical transmembrane segment at 96-116 threads the bilayer; sequence ILGALTVFYPSIALWLLAFIS. The Cytoplasmic segment spans residues 117–138; it reads ADRYMAIVQPKYAKELKNTCKA. A helical transmembrane segment spans residues 139–159; it reads VLACVGVWIMTLTTTTPLLLL. Residues 160 to 191 lie on the Extracellular side of the membrane; that stretch reads YKDPDKDSTPATCLKISDIIYLKAVNVLNLTR. The helical transmembrane segment at 192 to 212 threads the bilayer; that stretch reads LTFFFLIPLFIMIGCYLVIIH. Topologically, residues 213-232 are cytoplasmic; that stretch reads NLLHGRTSKLKPKVKEKSIR. The chain crosses the membrane as a helical span at residues 233–253; sequence IIITLLVQVLVCFMPFHICFA. Residues 254–268 are Extracellular-facing; sequence FLMLGTGENSYNPWG. A helical transmembrane segment spans residues 269–289; sequence AFTTFLMNLSTCLDVILYYIV. The Cytoplasmic portion of the chain corresponds to 290 to 331; that stretch reads SKQFQARVISVMLYRNYLRSMRRKSFRSGSLRSLSNINSEML. S322 is modified (phosphoserine).

Belongs to the G-protein coupled receptor 1 family. As to expression, expressed in midpiece of spermatozoon (at protein level). Most abundant in testis and spleen. Highly expressed in CD4 and CD8-positive T-cells as well as CD19-positive B-cells.

Its subcellular location is the cell membrane. It localises to the cytoplasmic vesicle membrane. G protein-coupled receptor (GPCR) that plays a role in diverse physiological processes particularly within the immune and nervous systems. Becomes active when triggered by various endogenous ligands including endocannabinoid N-arachidonyl glycine (NAGly), delta-9-tetrahydrocannabinol or resolvin D2/RvD2 derived from the omega-3 fatty acid docosahexaenoic acid (DHA). Upon RvD2 binding, facilitates the resolution of inflammation, aiding in tissue repair and homeostasis. Mechanistically, RvD2 ligation initiates Galphas protein coupling, activation of cAMP-PKA signaling pathway and phosphorylation of STAT3, leading to RvD2-stimulated macrophage phagocytosis. Mediates NAGly-induced process of reorganization of actin filaments and induction of acrosomal exocytosis. Activation by N-arachidonoyl glycine (NAGly) can also induce apoptosis in macrophages. Plays a role in homeostasis of CD8+ subsets of intraepithelial lymphocytes (IELs) (CD8alphaalpha and CD8alphabeta IELs) in small intestine by supporting preferential migration of CD8alphaalpha T-cells to intraepithelial compartment over lamina propria compartment, and by mediating their reconstitution into small intestine after bone marrow transplant. Also participates in hypotensive responses, mediating reduction in intraocular and blood pressure. The sequence is that of N-arachidonyl glycine receptor (GPR18) from Homo sapiens (Human).